We begin with the raw amino-acid sequence, 275 residues long: tRNA pseudouridine synthase A (275 aa).

The Nucleophile role is filled by Asp-60. Substrate is bound at residue Tyr-119.

This sequence belongs to the tRNA pseudouridine synthase TruA family. Homodimer.

It carries out the reaction uridine(38/39/40) in tRNA = pseudouridine(38/39/40) in tRNA. Its function is as follows. Formation of pseudouridine at positions 38, 39 and 40 in the anticodon stem and loop of transfer RNAs. The polypeptide is tRNA pseudouridine synthase A (Synechocystis sp. (strain ATCC 27184 / PCC 6803 / Kazusa)).